A 286-amino-acid chain; its full sequence is Polyamine aminopropyltransferase 1 (286 aa).

The PABS domain maps to 1-235 (MSDYQETLYQ…GAMTFAWGST (235 aa)). Q30 lines the S-methyl-5'-thioadenosine pocket. 2 residues coordinate spermidine: H61 and D85. Residues E105 and 137–138 (DG) contribute to the S-methyl-5'-thioadenosine site. The active-site Proton acceptor is D155. 155–158 (DSTD) lines the spermidine pocket. P162 is an S-methyl-5'-thioadenosine binding site.

This sequence belongs to the spermidine/spermine synthase family. In terms of assembly, homodimer or homotetramer.

It is found in the cytoplasm. The catalysed reaction is S-adenosyl 3-(methylsulfanyl)propylamine + putrescine = S-methyl-5'-thioadenosine + spermidine + H(+). Its pathway is amine and polyamine biosynthesis; spermidine biosynthesis; spermidine from putrescine: step 1/1. Catalyzes the irreversible transfer of a propylamine group from the amino donor S-adenosylmethioninamine (decarboxy-AdoMet) to putrescine (1,4-diaminobutane) to yield spermidine. This Pseudomonas aeruginosa (strain ATCC 15692 / DSM 22644 / CIP 104116 / JCM 14847 / LMG 12228 / 1C / PRS 101 / PAO1) protein is Polyamine aminopropyltransferase 1.